A 219-amino-acid polypeptide reads, in one-letter code: Probable GTP-binding protein EngB (219 aa).

In terms of domain architecture, EngB-type G spans Val-24–Pro-207. Residues Gly-32–Ser-39, Gly-59–His-63, Asp-81–Gly-84, Thr-148–Asp-151, and Phe-186–Ala-188 contribute to the GTP site. The Mg(2+) site is built by Ser-39 and Thr-61.

Belongs to the TRAFAC class TrmE-Era-EngA-EngB-Septin-like GTPase superfamily. EngB GTPase family. Requires Mg(2+) as cofactor.

Necessary for normal cell division and for the maintenance of normal septation. This chain is Probable GTP-binding protein EngB, found in Burkholderia cenocepacia (strain HI2424).